The primary structure comprises 307 residues: Ribosomal protein L11 methyltransferase (307 aa).

S-adenosyl-L-methionine-binding residues include T154, G178, D200, and N242.

It belongs to the methyltransferase superfamily. PrmA family.

It localises to the cytoplasm. The catalysed reaction is L-lysyl-[protein] + 3 S-adenosyl-L-methionine = N(6),N(6),N(6)-trimethyl-L-lysyl-[protein] + 3 S-adenosyl-L-homocysteine + 3 H(+). In terms of biological role, methylates ribosomal protein L11. In Syntrophotalea carbinolica (strain DSM 2380 / NBRC 103641 / GraBd1) (Pelobacter carbinolicus), this protein is Ribosomal protein L11 methyltransferase.